A 302-amino-acid polypeptide reads, in one-letter code: Cuticle collagen 40 (302 aa).

Disordered stretches follow at residues 79–103 and 119–302; these read RIKR…GGGG and AGAP…APGY. Positions 91–103 are enriched in gly residues; it reads YAEGGAAAGGGGG. Triple-helical region stretches follow at residues 114-143, 162-185, 189-221, 226-252, and 255-290; these read GAAG…AGSD, GPAG…DGNT, GGEG…PGQV, GTPG…AGAS, and GPAG…GGGC. Positions 137–154 are enriched in low complexity; it reads PGTAGSDAEAAAAPTASD. Positions 194 to 203 are enriched in pro residues; the sequence is AGPPGPPGPA. Composition is skewed to low complexity over residues 205–234 and 245–281; these read NPGT…AGAA and NPGS…PGEA. The span at 293-302 shows a compositional bias: pro residues; sequence CPPPRTAPGY.

It belongs to the cuticular collagen family. In terms of assembly, collagen polypeptide chains are complexed within the cuticle by disulfide bonds and other types of covalent cross-links.

Nematode cuticles are composed largely of collagen-like proteins. The cuticle functions both as an exoskeleton and as a barrier to protect the worm from its environment. This chain is Cuticle collagen 40 (col-40), found in Caenorhabditis elegans.